Here is a 238-residue protein sequence, read N- to C-terminus: Pre-protein VI (238 aa).

Positions 1 to 33 (MDAVNFSILAPRYGSHPMMSAWSGIGTSDMNGG) are excised as a propeptide. Residues 34-54 (AFNWGGIWSGIKNFGSNVKNW) are amphipathic alpha-helix essential for membrane lytic activity. Residues 36 to 53 (NWGGIWSGIKNFGSNVKN) are involved in endosomal membrane lysis. Residues 48–74 (GSNVKNWGSRAWNSQTGKLLRQKLNDT) are interaction with hexon protein. The Nuclear export signal motif lies at 67 to 76 (LRQKLNDTKV). The short motif at 153–156 (PPSY) is the PPXY motif element. A disordered region spans residues 187-212 (TLELKPSDQPPPYSPQSSNMPVTAPV). Residues 219–230 (GTLANIVGVGLS) carry the Nuclear export signal motif. The interaction with hexon protein stretch occupies residues 221 to 227 (LANIVGV). Residues 228–238 (GLSNVKRRRCF) are binds to importin alpha/beta, involved in hexon nuclear import. The Nuclear localization signal signature appears at 233–236 (KRRR).

Belongs to the adenoviridae protein VI family. In terms of assembly, interacts with hexon protein; this interaction allows nuclear import of hexon trimers and possibly pre-capsid assembly. Interacts (via C-terminal NLS) with importin alpha/beta. As to quaternary structure, interacts (via PPxY motif) with host NEDD4 ubiquitine ligase; this interaction might play a role in virus intracellular transport during entry. Part of a complex composed of the core-capsid bridging protein, the endosome lysis protein VI and the hexon-linking protein VIII; these interactions bridge the virus core to the capsid. Interacts with peripentonal hexons; this interaction stabilizes the capsid by gluing two peripentonal hexons together and joining them with an adjacent group-of-nine hexon. Heterodimer with the viral protease; disulfide-linked. Interacts with the viral protease. In terms of processing, ubiquitinated by Nedd4 following partial capsid disassembly; which might play a role in intracellular virus movement during entry. Contains the major nuclear import and export signals. Proteolytically removed during virion maturation. The processing of the C-terminus turns the precursor into a mature viral structural protein and abrogates its ability to promote hexon import and act as a potential chaperone protein.

The protein localises to the host nucleus. Its subcellular location is the host cytoplasm. It is found in the virion. During virus assembly, promotes hexon trimers nuclear import through nuclear pore complexes via an importin alpha/beta-dependent mechanism. By analogy to herpesviruses capsid assembly, might act as a chaperone to promote the formation of the icosahedral capsid. Its function is as follows. Structural component of the virion that provides increased stability to the particle shell through its interaction with the core-capsid bridging protein and the hexon-linking protein VIII. Fibers shedding during virus entry into host cell allows the endosome lysis protein to be exposed as a membrane-lytic peptide. Exhibits pH-independent membrane fragmentation activity and probably mediates viral rapid escape from host endosome via organellar membrane lysis. It is not clear if it then remains partially associated with the capsid and involved in the intracellular microtubule-dependent transport of capsid to the nucleus, or if it is lost during endosomal penetration. Functionally, cofactor that activates the viral protease. Binds to viral protease in a 1:1 ratio. This is Pre-protein VI from Canis lupus familiaris (Dog).